Consider the following 401-residue polypeptide: F-box protein At1g69090 (401 aa).

Residues 1–23 (MASPTLALAQSPPPKSPAVSVSQ) are disordered. Positions 27 to 74 (HCWSKLPLDLMQLVFERLAFLDFERAKSVCSSWQFGSKQSKPNNQIPW) constitute an F-box domain.

This Arabidopsis thaliana (Mouse-ear cress) protein is F-box protein At1g69090.